The chain runs to 183 residues: Photosystem I assembly protein Ycf3 (183 aa).

3 TPR repeats span residues 35–68 (AFIYYRDGMSAQSEGEYAEALGSYYKAMRLEIDS), 72–105 (SYILYNIGLIHTSNGNHAKALEYYFQALERNSFL), and 120–153 (GEQAIYQGDLEISEAWFDQAAEYWRRAIALSPDN).

Belongs to the Ycf3 family.

The protein resides in the plastid. The protein localises to the chloroplast thylakoid membrane. Its function is as follows. Essential for the assembly of the photosystem I (PSI) complex. May act as a chaperone-like factor to guide the assembly of the PSI subunits. This Adiantum capillus-veneris (Maidenhair fern) protein is Photosystem I assembly protein Ycf3.